Reading from the N-terminus, the 149-residue chain is 3-dehydroquinate dehydratase (149 aa).

The active-site Proton acceptor is Y26. Residues N77, H83, and D90 each contribute to the substrate site. H103 functions as the Proton donor in the catalytic mechanism. Substrate contacts are provided by residues 104–105 (LS) and R114.

It belongs to the type-II 3-dehydroquinase family. Homododecamer.

The catalysed reaction is 3-dehydroquinate = 3-dehydroshikimate + H2O. The protein operates within metabolic intermediate biosynthesis; chorismate biosynthesis; chorismate from D-erythrose 4-phosphate and phosphoenolpyruvate: step 3/7. Functionally, catalyzes a trans-dehydration via an enolate intermediate. The chain is 3-dehydroquinate dehydratase from Aeromonas salmonicida (strain A449).